The sequence spans 245 residues: NAD-dependent protein deacetylase (245 aa).

Positions methionine 1 to lysine 245 constitute a Deacetylase sirtuin-type domain. NAD(+)-binding residues include alanine 26, threonine 30, phenylalanine 37, arginine 38, glutamine 105, isoleucine 107, aspartate 108, and histidine 123. Phenylalanine 37 contacts nicotinamide. Isoleucine 107 and aspartate 108 together coordinate nicotinamide. The active-site Proton acceptor is the histidine 123. Residues cysteine 131, cysteine 134, cysteine 151, and cysteine 154 each coordinate Zn(2+). Positions 190, 191, 216, and 234 each coordinate NAD(+).

This sequence belongs to the sirtuin family. Class U subfamily. It depends on Zn(2+) as a cofactor.

The protein resides in the cytoplasm. The catalysed reaction is N(6)-acetyl-L-lysyl-[protein] + NAD(+) + H2O = 2''-O-acetyl-ADP-D-ribose + nicotinamide + L-lysyl-[protein]. NAD-dependent protein deacetylase which modulates the activities of several enzymes which are inactive in their acetylated form. The sequence is that of NAD-dependent protein deacetylase from Bacillus cereus (strain ZK / E33L).